We begin with the raw amino-acid sequence, 325 residues long: Elongation factor P--(R)-beta-lysine ligase (325 aa).

76–78 (SPE) provides a ligand contact to substrate. ATP-binding positions include 100–102 (RNE) and Asn-109. Residue Tyr-118 participates in substrate binding. 244-245 (EL) is a binding site for ATP. Substrate is bound at residue Glu-251. Gly-300 serves as a coordination point for ATP.

Belongs to the class-II aminoacyl-tRNA synthetase family. EpmA subfamily. As to quaternary structure, homodimer.

The enzyme catalyses D-beta-lysine + L-lysyl-[protein] + ATP = N(6)-((3R)-3,6-diaminohexanoyl)-L-lysyl-[protein] + AMP + diphosphate + H(+). Its function is as follows. With EpmB is involved in the beta-lysylation step of the post-translational modification of translation elongation factor P (EF-P) on 'Lys-34'. Catalyzes the ATP-dependent activation of (R)-beta-lysine produced by EpmB, forming a lysyl-adenylate, from which the beta-lysyl moiety is then transferred to the epsilon-amino group of EF-P 'Lys-34'. This is Elongation factor P--(R)-beta-lysine ligase from Escherichia coli O139:H28 (strain E24377A / ETEC).